The primary structure comprises 53 residues: Large ribosomal subunit protein uL30 (53 aa).

Belongs to the universal ribosomal protein uL30 family. Part of the 50S ribosomal subunit.

The polypeptide is Large ribosomal subunit protein uL30 (Deinococcus geothermalis (strain DSM 11300 / CIP 105573 / AG-3a)).